Here is a 79-residue protein sequence, read N- to C-terminus: Small ribosomal subunit protein bS18 (79 aa).

Belongs to the bacterial ribosomal protein bS18 family. As to quaternary structure, part of the 30S ribosomal subunit. Forms a tight heterodimer with protein bS6.

Its function is as follows. Binds as a heterodimer with protein bS6 to the central domain of the 16S rRNA, where it helps stabilize the platform of the 30S subunit. The chain is Small ribosomal subunit protein bS18 from Bradyrhizobium sp. (strain BTAi1 / ATCC BAA-1182).